Here is a 22-residue protein sequence, read N- to C-terminus: NADH dehydrogenase [ubiquinone] 1 alpha subcomplex subunit 9 (22 aa).

The disordered stretch occupies residues 1 to 22 (ASNLATGGAGPLIXKGTGGRSS).

It belongs to the complex I NDUFA9 subunit family. Complex I is composed of about 45 different subunits. FAD is required as a cofactor.

Its subcellular location is the mitochondrion matrix. In terms of biological role, accessory subunit of the mitochondrial membrane respiratory chain NADH dehydrogenase (Complex I), that is believed not to be involved in catalysis. Complex I functions in the transfer of electrons from NADH to the respiratory chain. The immediate electron acceptor for the enzyme is believed to be ubiquinone. The chain is NADH dehydrogenase [ubiquinone] 1 alpha subcomplex subunit 9 from Solanum tuberosum (Potato).